The chain runs to 579 residues: Zinc metalloproteinase nas-11 (579 aa).

A signal peptide spans 1 to 17; sequence MTPSLVFLIVVIVVVEG. A propeptide spanning residues 18–328 is cleaved from the precursor; the sequence is QGWRPWDRFN…AAPGSSRLKK (311 aa). The tract at residues 35–58 is disordered; it reads WGGNNWGTRQRNQEPHDIPPPVPP. Asn-256 carries an N-linked (GlcNAc...) asparagine glycan. Positions 293–312 are enriched in acidic residues; it reads GDDEIPLPDADTDDEDDDDS. Residues 293-323 are disordered; the sequence is GDDEIPLPDADTDDEDDDDSTNSASGAAPGS. The region spanning 329–536 is the Peptidase M12A domain; sequence SALYFEGNLI…IELLKKMYCQ (208 aa). 5 cysteine pairs are disulfide-bonded: Cys-375–Cys-535, Cys-401–Cys-421, Cys-539–Cys-575, Cys-546–Cys-568, and Cys-555–Cys-572. Zn(2+) is bound at residue His-430. Glu-431 is a catalytic residue. Zn(2+)-binding residues include His-434 and His-440. An N-linked (GlcNAc...) asparagine glycan is attached at Asn-454. Positions 539-575 constitute a ShKT domain; that stretch reads CDDKNVYCGAWALKDLCKNPGHDQYMAANCKKSCGLC.

It depends on Zn(2+) as a cofactor. As to expression, expressed in the anterior part of the intestine, CEP neurons and to a lesser extent in hypodermis.

Its subcellular location is the secreted. Functionally, metalloprotease. This is Zinc metalloproteinase nas-11 (nas-11) from Caenorhabditis elegans.